We begin with the raw amino-acid sequence, 115 residues long: T cell receptor delta variable 1 (115 aa).

The signal sequence occupies residues 1-21 (MLFSSLLCVFVAFSYSGSSVA). The 94-residue stretch at 22 to 115 (QKVTQAQSSV…SAKYFCALGE (94 aa)) folds into the Ig-like domain. Cysteines 43 and 111 form a disulfide.

In terms of assembly, gamma-delta TR is a heterodimer composed of a gamma and delta chain; disulfide-linked. The gamma-delta TR is associated with the transmembrane signaling CD3 coreceptor proteins following the stoichiometry: a single gamma-delta TR heterodimer associates with one CD3D-CD3E heterodimer, one CD3G-CD3E heterodimer and one CD247 homodimer forming a stable octameric structure. Upon activation, gamma-delta TR complex associates with FCER1G to initiate intracellular signaling.

Its subcellular location is the cell membrane. Functionally, v region of the variable domain of T cell receptor (TR) delta chain that participates in the antigen recognition. Gamma-delta TRs recognize a variety of self and foreign non-peptide antigens frequently expressed at the epithelial boundaries between the host and external environment, including endogenous lipids presented by MH-like protein CD1D and phosphoantigens presented by butyrophilin-like molecule BTN3A1. Upon antigen recognition induces rapid, innate-like immune responses involved in pathogen clearance and tissue repair. Binding of gamma-delta TR complex to antigen triggers phosphorylation of immunoreceptor tyrosine-based activation motifs (ITAMs) in the CD3 chains by the LCK and FYN kinases, allowing the recruitment, phosphorylation, and activation of ZAP70 that facilitates phosphorylation of the scaffolding proteins LCP2 and LAT. This lead to the formation of a supramolecular signalosome that recruits the phospholipase PLCG1, resulting in calcium mobilization and ERK activation, ultimately leading to T cell expansion and differentiation into effector cells. Gamma-delta TRs are produced through somatic rearrangement of a limited repertoire of variable (V), diversity (D), and joining (J) genes. The potential diversity of gamma-delta TRs is conferred by the unique ability to rearrange (D) genes in tandem and to utilize all three reading frames. The combinatorial diversity is considerably increased by the sequence exonuclease trimming and random nucleotide (N) region additions which occur during the V-(D)-J rearrangements. The polypeptide is T cell receptor delta variable 1 (Homo sapiens (Human)).